A 107-amino-acid chain; its full sequence is QSIIRKLILVSKGTNISVDNNYVVRPTSIKVYIEVVKYLVSQGANIRADNDCAVRFASRNGHLEVVKYLVSLGANIRADNDCAVRWASRNGHLDVVEYLVSLGAVLS.

ANK repeat units lie at residues 19 to 48, 49 to 78, and 80 to 107; these read DNNY…NIRA, DNDC…NIRA, and NDCA…AVLS.

In Acanthamoeba polyphaga (Amoeba), this protein is Putative ankyrin repeat protein L14.